Reading from the N-terminus, the 323-residue chain is tRNA U34 carboxymethyltransferase (323 aa).

Carboxy-S-adenosyl-L-methionine contacts are provided by residues lysine 91, tryptophan 105, lysine 110, glycine 130, 152-154 (DPT), 181-182 (IE), methionine 196, tyrosine 200, and arginine 315.

The protein belongs to the class I-like SAM-binding methyltransferase superfamily. CmoB family. As to quaternary structure, homotetramer.

The enzyme catalyses carboxy-S-adenosyl-L-methionine + 5-hydroxyuridine(34) in tRNA = 5-carboxymethoxyuridine(34) in tRNA + S-adenosyl-L-homocysteine + H(+). Functionally, catalyzes carboxymethyl transfer from carboxy-S-adenosyl-L-methionine (Cx-SAM) to 5-hydroxyuridine (ho5U) to form 5-carboxymethoxyuridine (cmo5U) at position 34 in tRNAs. In Cronobacter sakazakii (strain ATCC BAA-894) (Enterobacter sakazakii), this protein is tRNA U34 carboxymethyltransferase.